The following is a 234-amino-acid chain: MEFLKLSEGKTKEVYAYDDSHVLLKFKDSITAGDGARKDILEGKGILNAQTSAFLFRLLESKGIETHYIGMFDERTMIAKKLKMIPVEVVLRNIATGSIVKRLPIKEGEVFEPPIIEFFLKDDERHDPMLNYYHMEYLKLMTRKEAEKIEEIMLKVNEILYPFFRSKKLLLYDFKLEFGRVNDKLIIGDELTLDSMRIREEGSGRILDKDLYRKGADLETVKKAYEEFFKRISE.

It belongs to the SAICAR synthetase family.

The enzyme catalyses 5-amino-1-(5-phospho-D-ribosyl)imidazole-4-carboxylate + L-aspartate + ATP = (2S)-2-[5-amino-1-(5-phospho-beta-D-ribosyl)imidazole-4-carboxamido]succinate + ADP + phosphate + 2 H(+). It participates in purine metabolism; IMP biosynthesis via de novo pathway; 5-amino-1-(5-phospho-D-ribosyl)imidazole-4-carboxamide from 5-amino-1-(5-phospho-D-ribosyl)imidazole-4-carboxylate: step 1/2. The polypeptide is Phosphoribosylaminoimidazole-succinocarboxamide synthase (Sulfurisphaera tokodaii (strain DSM 16993 / JCM 10545 / NBRC 100140 / 7) (Sulfolobus tokodaii)).